The chain runs to 711 residues: Exotoxin translocation ATP-binding protein PaxB (711 aa).

Residues 1-129 (MEPLMSFKQK…QVFQGNVILL (129 aa)) form the Peptidase C39 domain. A run of 5 helical transmembrane segments spans residues 157-177 (IFVE…ITPL), 195-215 (LNVI…LSGL), 273-293 (ALTS…MWYY), 299-319 (IVIL…SPIL), and 392-412 (VMII…LSIG). The region spanning 158-440 (FVEVMIVSIF…LAQLWQDFQQ (283 aa)) is the ABC transmembrane type-1 domain. The ABC transporter domain occupies 472-707 (VTFKNIRFRY…KDGLYYYLNQ (236 aa)). 506-513 (GRSGSGKS) is an ATP binding site.

The protein belongs to the ABC transporter superfamily. Protein-1 exporter (TC 3.A.1.109) family. Homodimer.

It localises to the cell inner membrane. The catalysed reaction is ATP + H2O + proteinSide 1 = ADP + phosphate + proteinSide 2.. Its function is as follows. Part of the ABC transporter complex PaxBD involved in PaxA export. Transmembrane domains (TMD) form a pore in the inner membrane and the ATP-binding domain (NBD) is responsible for energy generation. This Pasteurella aerogenes protein is Exotoxin translocation ATP-binding protein PaxB (paxB).